Reading from the N-terminus, the 354-residue chain is Ornithine transcarbamylase, mitochondrial (354 aa).

The transit peptide at 1-32 (MLFNLKNLYRITKLTQNSKHLPRHFCRGPPNQ) directs the protein to the mitochondrion. Carbamoyl phosphate is bound by residues 90 to 94 (STRTR), Arg141, and His168. Arg141 contributes to the L-ornithine binding site. L-ornithine is bound by residues Asn199, 263–267 (DTWIS), 302–305 (HCLP), and Arg330. Cys303 is an active-site residue. Arg330 lines the carbamoyl phosphate pocket.

Belongs to the aspartate/ornithine carbamoyltransferase superfamily. OTCase family. Homotrimer. Post-translationally, cleavage of the precursor form to the active form occurs only in the kidney. In terms of tissue distribution, expressed in kidney, brain, heart, liver, pancreas, gizzard, small intestine and breast muscle. More abundant in mitochondrion-rich organs (heart, liver and brain) than in other organs. Activity is only detected in the kidney.

It localises to the mitochondrion matrix. The enzyme catalyses carbamoyl phosphate + L-ornithine = L-citrulline + phosphate + H(+). It participates in nitrogen metabolism; urea cycle; L-citrulline from L-ornithine and carbamoyl phosphate: step 1/1. Inhibition by ornithine increases at higher pH. Functionally, catalyzes the second step of the urea cycle, the condensation of carbamoyl phosphate with L-ornithine to form L-citrulline. The urea cycle ensures the detoxification of ammonia by converting it to urea for excretion. The protein is Ornithine transcarbamylase, mitochondrial of Gallus gallus (Chicken).